The following is a 703-amino-acid chain: DNA ligase (703 aa).

Residues 44–48, 93–94, and Glu-127 contribute to the NAD(+) site; these read DAEYD and SL. Residue Lys-129 is the N6-AMP-lysine intermediate of the active site. Residues Arg-150, Glu-186, Lys-302, and Lys-326 each coordinate NAD(+). Cys-420, Cys-422, Cys-444, and Cys-450 together coordinate Zn(2+). The region spanning 625-703 is the BRCT domain; that stretch reads VADSPVAGKT…EDMWFQRIGA (79 aa).

The protein belongs to the NAD-dependent DNA ligase family. LigA subfamily. It depends on Mg(2+) as a cofactor. Mn(2+) is required as a cofactor.

The catalysed reaction is NAD(+) + (deoxyribonucleotide)n-3'-hydroxyl + 5'-phospho-(deoxyribonucleotide)m = (deoxyribonucleotide)n+m + AMP + beta-nicotinamide D-nucleotide.. Its function is as follows. DNA ligase that catalyzes the formation of phosphodiester linkages between 5'-phosphoryl and 3'-hydroxyl groups in double-stranded DNA using NAD as a coenzyme and as the energy source for the reaction. It is essential for DNA replication and repair of damaged DNA. The chain is DNA ligase from Chelativorans sp. (strain BNC1).